Consider the following 199-residue polypeptide: Transgelin-2 (199 aa).

At Ala2 the chain carries N-acetylalanine. At Ser11 the chain carries Phosphoserine. N6-acetyllysine is present on residues Lys17 and Lys20. Positions 24–136 (PDLEQILIQW…RTLMNLGGLA (113 aa)) constitute a Calponin-homology (CH) domain. Phosphoserine is present on Ser163. Lys171 is covalently cross-linked (Glycyl lysine isopeptide (Lys-Gly) (interchain with G-Cter in SUMO2)). One copy of the Calponin-like repeat lies at 174 to 199 (IGLQMGTNRGASQAGMTGYGMPRQIL). Phosphothreonine is present on Thr180. An omega-N-methylarginine mark is found at Arg182 and Arg196.

Belongs to the calponin family.

This Rattus norvegicus (Rat) protein is Transgelin-2 (Tagln2).